Reading from the N-terminus, the 155-residue chain is Large ribosomal subunit protein uL22 (155 aa).

This sequence belongs to the universal ribosomal protein uL22 family. Part of the 50S ribosomal subunit.

In terms of biological role, this protein binds specifically to 23S rRNA. It makes multiple contacts with different domains of the 23S rRNA in the assembled 50S subunit and ribosome. Its function is as follows. The globular domain of the protein is located near the polypeptide exit tunnel on the outside of the subunit, while an extended beta-hairpin is found that lines the wall of the exit tunnel in the center of the 70S ribosome. The polypeptide is Large ribosomal subunit protein uL22 (Archaeoglobus fulgidus (strain ATCC 49558 / DSM 4304 / JCM 9628 / NBRC 100126 / VC-16)).